Reading from the N-terminus, the 272-residue chain is Glutamate racemase (272 aa).

Substrate-binding positions include aspartate 13 to serine 14 and tyrosine 45 to glycine 46. Cysteine 76 (proton donor/acceptor) is an active-site residue. Asparagine 77 to threonine 78 serves as a coordination point for substrate. Cysteine 186 serves as the catalytic Proton donor/acceptor. Threonine 187–histidine 188 contributes to the substrate binding site.

Belongs to the aspartate/glutamate racemases family.

It carries out the reaction L-glutamate = D-glutamate. It participates in cell wall biogenesis; peptidoglycan biosynthesis. Provides the (R)-glutamate required for cell wall biosynthesis. This Cupriavidus pinatubonensis (strain JMP 134 / LMG 1197) (Cupriavidus necator (strain JMP 134)) protein is Glutamate racemase.